A 552-amino-acid chain; its full sequence is Putative E3 ubiquitin-protein ligase ARI6 (552 aa).

The interval 129–343 (REFTCGICFE…GGYYACNRYE (215 aa)) is TRIAD supradomain. Residues Cys-133, Cys-136, Cys-150, His-152, Cys-155, Cys-158, Cys-178, Cys-183, Cys-222, Cys-227, Cys-245, Cys-247, Cys-252, Cys-255, His-260, Cys-265, Cys-292, and Cys-295 each contribute to the Zn(2+) site. The segment at 133 to 183 (CGICFESYPLEETISVSCGHPFCATCWTGYISTSINDGPGCLMLKCPYPCC) adopts an RING-type 1 zinc-finger fold. Residues 202-265 (ERYYRYFLRS…SEEAHRPVDC (64 aa)) form an IBR-type zinc finger. Residues 292–322 (CPKCKRPIEKNHGCMHMTCTPPCKFEFCWLC) form an RING-type 2; atypical zinc finger. Cys-305 is a catalytic residue. Residues Cys-310, Cys-314, Cys-319, Cys-322, His-329, and Cys-339 each contribute to the Zn(2+) site. Residues 518 to 552 (HAASSKPANCKPSSNTKDGGKGKKEALTMAGSAET) form a disordered region. Residues 519–534 (AASSKPANCKPSSNTK) are compositionally biased toward polar residues.

It belongs to the RBR family. Ariadne subfamily. Zn(2+) serves as cofactor.

It catalyses the reaction [E2 ubiquitin-conjugating enzyme]-S-ubiquitinyl-L-cysteine + [acceptor protein]-L-lysine = [E2 ubiquitin-conjugating enzyme]-L-cysteine + [acceptor protein]-N(6)-ubiquitinyl-L-lysine.. The protein operates within protein modification; protein ubiquitination. Might act as an E3 ubiquitin-protein ligase, or as part of E3 complex, which accepts ubiquitin from specific E2 ubiquitin-conjugating enzymes and then transfers it to substrates. The chain is Putative E3 ubiquitin-protein ligase ARI6 (ARI6) from Arabidopsis thaliana (Mouse-ear cress).